Consider the following 263-residue polypeptide: METKLQLHGFNNLTKSLSFNIYDICYAQTEEQREAYIDYIDEMYNAERLTQILTDVVKIIGANVLNIARQDYEPHGASVTMLIAEHELSDSEANNEESPGPLPDTIVAHLDKSHVTVHTYPESHPHDGVSTFRADIDVSTCGLISPLKVLNYLIHSFDSDVVTVDYRVRGFTRDVDGTKHYIDHDINSIQNYLTEDTQNAYQMIDVNVYQENLFHTKMMLKEFNLDNYVFGVNAGDLDPAEAQSIEDRLRREMLEIFYSRNVE.

The Schiff-base intermediate with substrate; via pyruvic acid role is filled by serine 113. Serine 113 carries the post-translational modification Pyruvic acid (Ser); by autocatalysis. Histidine 118 acts as the Proton acceptor; for processing activity in catalysis. Cysteine 141 functions as the Proton donor; for catalytic activity in the catalytic mechanism.

This sequence belongs to the prokaryotic AdoMetDC family. Type 2 subfamily. In terms of assembly, heterooctamer of four alpha and four beta chains arranged as a tetramer of alpha/beta heterodimers. Pyruvate is required as a cofactor. In terms of processing, is synthesized initially as an inactive proenzyme. Formation of the active enzyme involves a self-maturation process in which the active site pyruvoyl group is generated from an internal serine residue via an autocatalytic post-translational modification. Two non-identical subunits are generated from the proenzyme in this reaction, and the pyruvate is formed at the N-terminus of the alpha chain, which is derived from the carboxyl end of the proenzyme. The post-translation cleavage follows an unusual pathway, termed non-hydrolytic serinolysis, in which the side chain hydroxyl group of the serine supplies its oxygen atom to form the C-terminus of the beta chain, while the remainder of the serine residue undergoes an oxidative deamination to produce ammonia and the pyruvoyl group blocking the N-terminus of the alpha chain.

It catalyses the reaction S-adenosyl-L-methionine + H(+) = S-adenosyl 3-(methylsulfanyl)propylamine + CO2. The protein operates within amine and polyamine biosynthesis; S-adenosylmethioninamine biosynthesis; S-adenosylmethioninamine from S-adenosyl-L-methionine: step 1/1. Its function is as follows. Catalyzes the decarboxylation of S-adenosylmethionine to S-adenosylmethioninamine (dcAdoMet), the propylamine donor required for the synthesis of the polyamines spermine and spermidine from the diamine putrescine. This Marinobacter nauticus (strain ATCC 700491 / DSM 11845 / VT8) (Marinobacter aquaeolei) protein is S-adenosylmethionine decarboxylase proenzyme.